We begin with the raw amino-acid sequence, 346 residues long: NADH-quinone oxidoreductase subunit H 2 (346 aa).

Helical transmembrane passes span 14 to 34, 83 to 103, 136 to 156, 172 to 192, 208 to 228, 260 to 280, 289 to 309, and 324 to 344; these read IAMV…VAYA, FAFL…FAVI, VGVL…VLAG, SAQM…VFML, GAWY…CSIA, FFMA…TLFL, LPGW…CMWI, and LGWK…GIIV.

The protein belongs to the complex I subunit 1 family. In terms of assembly, NDH-1 is composed of 14 different subunits. Subunits NuoA, H, J, K, L, M, N constitute the membrane sector of the complex.

It localises to the cell inner membrane. It catalyses the reaction a quinone + NADH + 5 H(+)(in) = a quinol + NAD(+) + 4 H(+)(out). Functionally, NDH-1 shuttles electrons from NADH, via FMN and iron-sulfur (Fe-S) centers, to quinones in the respiratory chain. The immediate electron acceptor for the enzyme in this species is believed to be ubiquinone. Couples the redox reaction to proton translocation (for every two electrons transferred, four hydrogen ions are translocated across the cytoplasmic membrane), and thus conserves the redox energy in a proton gradient. This subunit may bind ubiquinone. The chain is NADH-quinone oxidoreductase subunit H 2 from Geobacter metallireducens (strain ATCC 53774 / DSM 7210 / GS-15).